Here is a 299-residue protein sequence, read N- to C-terminus: MTFKSGFVAILGRPNVGKSTFLNYVMGQKIAIMSDKAQTTRNKIMGIYTTEEEQIVFIDTPGIHKPKTALGDFMVESAYSTLREVDTVLFMVPADEKRGKGDDMIMERLKQAKVPVILVVNKIDKVHPDQLLEQIDDFRQQMDFKEIVPISATQGNNVNRLMEILKENLDEGFQYFPADQITDHPERFLVSEMIREKVLHLTREEIPHSVAVVIESMKRDEFTDKVHIRATIMVERDSQKGIIIGKQGAMLKKIGSMARRDIELMLGDKVFLETWVKVKKNWRDKKLDLADFGYNEKEY.

The region spanning Lys4–Glu171 is the Era-type G domain. Residues Gly12–Ser19 are G1. Gly12–Ser19 serves as a coordination point for GTP. Residues Gln38–Asn42 are G2. The tract at residues Asp59–Gly62 is G3. GTP is bound by residues Asp59–Ile63 and Asn121–Asp124. The G4 stretch occupies residues Asn121–Asp124. A G5 region spans residues Ile150–Ala152. The KH type-2 domain maps to Thr202–Lys280.

Belongs to the TRAFAC class TrmE-Era-EngA-EngB-Septin-like GTPase superfamily. Era GTPase family. As to quaternary structure, monomer.

The protein resides in the cytoplasm. Its subcellular location is the cell membrane. Its function is as follows. An essential GTPase that binds both GDP and GTP, with rapid nucleotide exchange. Plays a role in 16S rRNA processing and 30S ribosomal subunit biogenesis and possibly also in cell cycle regulation and energy metabolism. The polypeptide is GTPase Era (Streptococcus suis (strain 98HAH33)).